A 113-amino-acid polypeptide reads, in one-letter code: Sperm-associated antigen 11B (113 aa).

The first 26 residues, 1–26, serve as a signal peptide directing secretion; the sequence is MIPRLLPFFASLLFAALLFPGLSNAS. 3 disulfides stabilise this stretch: Cys80–Cys108, Cys87–Cys101, and Cys91–Cys109.

It belongs to the beta-defensin family.

Its subcellular location is the secreted. In terms of biological role, has antimicrobial activity against E.coli. Plays a role in the defense response in the male reproductive tract, contributing to sperm maturation, storage and protection. In Mus musculus (Mouse), this protein is Sperm-associated antigen 11B.